Consider the following 361-residue polypeptide: Phospho-N-acetylmuramoyl-pentapeptide-transferase (361 aa).

The next 10 membrane-spanning stretches (helical) occupy residues 25 to 45, 73 to 93, 97 to 117, 134 to 154, 168 to 188, 200 to 220, 237 to 257, 264 to 284, 289 to 309, and 338 to 358; these read RAVL…PAVI, TMGG…WADL, YVWL…VDDW, YFWQ…TASL, ATFG…IVGA, GLAI…AYVA, AGEL…FLWF, VFMG…VAVV, IILF…MIQV, and QVVV…LSSL.

The protein belongs to the glycosyltransferase 4 family. MraY subfamily. Mg(2+) is required as a cofactor.

The protein localises to the cell inner membrane. The catalysed reaction is UDP-N-acetyl-alpha-D-muramoyl-L-alanyl-gamma-D-glutamyl-meso-2,6-diaminopimeloyl-D-alanyl-D-alanine + di-trans,octa-cis-undecaprenyl phosphate = di-trans,octa-cis-undecaprenyl diphospho-N-acetyl-alpha-D-muramoyl-L-alanyl-D-glutamyl-meso-2,6-diaminopimeloyl-D-alanyl-D-alanine + UMP. It functions in the pathway cell wall biogenesis; peptidoglycan biosynthesis. In terms of biological role, catalyzes the initial step of the lipid cycle reactions in the biosynthesis of the cell wall peptidoglycan: transfers peptidoglycan precursor phospho-MurNAc-pentapeptide from UDP-MurNAc-pentapeptide onto the lipid carrier undecaprenyl phosphate, yielding undecaprenyl-pyrophosphoryl-MurNAc-pentapeptide, known as lipid I. In Thiobacillus denitrificans (strain ATCC 25259 / T1), this protein is Phospho-N-acetylmuramoyl-pentapeptide-transferase.